The chain runs to 80 residues: RNA-binding protein KhpA (80 aa).

Residues 33-80 (LEILQLRVASEDVGKVIGKHGRIARALRTLLSASAHASQTRYALEIID) enclose the KH domain.

This sequence belongs to the KhpA RNA-binding protein family. Forms a complex with KhpB.

It is found in the cytoplasm. Its function is as follows. A probable RNA chaperone. Forms a complex with KhpB which binds to cellular RNA and controls its expression. Plays a role in peptidoglycan (PG) homeostasis and cell length regulation. The chain is RNA-binding protein KhpA from Treponema pallidum (strain Nichols).